A 352-amino-acid chain; its full sequence is Thymidine kinase (352 aa).

Glycine 32–serine 39 contributes to the ATP binding site. The active-site Proton acceptor is the glutamate 60. Tyrosine 78 and glutamine 102 together coordinate substrate. Arginine 192 serves as a coordination point for ATP. Substrate is bound at residue arginine 198.

This sequence belongs to the herpesviridae thymidine kinase family. In terms of assembly, homodimer.

The catalysed reaction is thymidine + ATP = dTMP + ADP + H(+). Its function is as follows. Catalyzes the transfer of the gamma-phospho group of ATP to thymidine to generate dTMP in the salvage pathway of pyrimidine synthesis. The dTMP serves as a substrate for DNA polymerase during viral DNA replication. Allows the virus to be reactivated and to grow in non-proliferative cells lacking a high concentration of phosphorylated nucleic acid precursors. This Equus caballus (Horse) protein is Thymidine kinase.